Reading from the N-terminus, the 83-residue chain is Aspergillic acid biosynthesis cluster protein F (83 aa).

The protein operates within secondary metabolite biosynthesis. Part of the gene cluster that mediates the biosynthesis of aspergillic acid, a hydroxamic acid-containing pyrazinone with aliphatic side chains that originates from leucine (Leu) and isoleucine (Ile). Aspergillic acid has antibiotic properties and was shown to be lethal to mice. The first step in the pathway is the production of deoxyaspergillic acid via a condensation between the Ile amine and the Leu carboxylic acid, followed by a reductive release from the protein forming the dipeptide aldehyde NH(2)-Leu-Ile-CHO, which could undergo an intermolecular cyclization resulting in a dihydropyrazinone. As the NRPS asaC lacks a condensation domain, it is improbable that it is responsible for condensation of Leu and Ile. One possibility is that asaC acts on a previously condensed dipeptide and functions as a Leu-Ile reductase to yield deoxyaspergillic acid. After asaC forms deoxyaspergillic acid, the cytochrome P450 asaD oxidizes the pyrazinone to the hydroxamic acid-containing bioactive metabolite aspergillic acid. The hydroxylase/desaturase asaB can then convert aspergillic acid to hydroxyaspergillic acid. Both aspergillic acid and hydroxyaspergillic acid can form complexes with iron producing ferriaspergillin analogs. The chain is Aspergillic acid biosynthesis cluster protein F from Aspergillus flavus (strain ATCC 200026 / FGSC A1120 / IAM 13836 / NRRL 3357 / JCM 12722 / SRRC 167).